The primary structure comprises 149 residues: Calmodulin (149 aa).

At Ala-2 the chain carries N-acetylalanine. EF-hand domains are found at residues 8–43 (EQIAEFKEAFSLFDKDGDGSITTKELGTVMRSLGQN), 44–79 (PTEAELQDMINEVDADGNGTIDFPEFLNLMARKMKD), 81–116 (DSEEELKEAFKVFDKDQNGYISAADWRHVMTNLGEK), and 117–149 (LTDEEVDEMIREADVDGDGQVNYEEFVKMMMAK). Ca(2+)-binding residues include Asp-21, Asp-23, Asp-25, Ser-27, Glu-32, Asp-57, Asp-59, Asn-61, Thr-63, Glu-68, Asp-94, Asp-96, Asn-98, Tyr-100, and Asp-105. N6,N6,N6-trimethyllysine is present on Lys-116. Asp-130, Asp-132, Asp-134, Gln-136, and Glu-141 together coordinate Ca(2+).

This sequence belongs to the calmodulin family.

Functionally, calmodulin mediates the control of a large number of enzymes, ion channels and other proteins by Ca(2+). Among the enzymes to be stimulated by the calmodulin-Ca(2+) complex are a number of protein kinases and phosphatases. The sequence is that of Calmodulin from Mougeotia scalaris (Green alga).